Reading from the N-terminus, the 471-residue chain is Tryptophan--tRNA ligase, cytoplasmic (471 aa).

A WHEP-TRS domain is found at S8–P64. Residues K59–E79 are disordered. At K154 the chain carries N6-succinyllysine. Residues P164–H173 carry the 'HIGH' region motif. The 'KMSKS' region signature appears at K349–S353. The residue at position 351 (S351) is a Phosphoserine.

It belongs to the class-I aminoacyl-tRNA synthetase family. As to quaternary structure, homodimer. Interacts with an oxidized form of GAPDH. GAPDH stimulates the aminoacylation activity of isoform 2. Post-translationally, proteolytic cleavage generates 2 forms; T1-TrpRS and T2-TrpRS.

It is found in the cytoplasm. The enzyme catalyses tRNA(Trp) + L-tryptophan + ATP = L-tryptophyl-tRNA(Trp) + AMP + diphosphate + H(+). Catalyzes the attachment of tryptophan to tRNA(Trp) in a two-step reaction: tryptophan is first activated by ATP to form Trp-AMP and then transferred to the acceptor end of the tRNA(Trp). Its function is as follows. Has no angiostatic activity. Functionally, possesses an angiostatic activity but has no aminoacylation activity. Inhibits fluid shear stress-activated responses of endothelial cells. Regulates ERK, Akt, and eNOS activation pathways that are associated with angiogenesis, cytoskeletal reorganization and shear stress-responsive gene expression. In terms of biological role, has an angiostatic activity. The protein is Tryptophan--tRNA ligase, cytoplasmic of Homo sapiens (Human).